A 359-amino-acid chain; its full sequence is Anhydro-N-acetylmuramic acid kinase (359 aa).

12-19 lines the ATP pocket; sequence GTSLDGVD.

This sequence belongs to the anhydro-N-acetylmuramic acid kinase family.

The catalysed reaction is 1,6-anhydro-N-acetyl-beta-muramate + ATP + H2O = N-acetyl-D-muramate 6-phosphate + ADP + H(+). The protein operates within amino-sugar metabolism; 1,6-anhydro-N-acetylmuramate degradation. It functions in the pathway cell wall biogenesis; peptidoglycan recycling. In terms of biological role, catalyzes the specific phosphorylation of 1,6-anhydro-N-acetylmuramic acid (anhMurNAc) with the simultaneous cleavage of the 1,6-anhydro ring, generating MurNAc-6-P. Is required for the utilization of anhMurNAc either imported from the medium or derived from its own cell wall murein, and thus plays a role in cell wall recycling. In Sulfurovum sp. (strain NBC37-1), this protein is Anhydro-N-acetylmuramic acid kinase.